We begin with the raw amino-acid sequence, 356 residues long: MKREQLIQNIEKLKHVMPPYVLEYYQSKLTVPYSLNTLYEYLKEYERFFSWLVDSGVADVDKITDVSLSVLENLTKRDLESFILYLRERPRLNTHSTRYGVSQTTINRTLSALSSLYKYLTEEVENEDGEPYFYRNVMKKVQTKKKSETLASRAENIKGKLFLGDETQGFLDYIDSEYEKTLSNRAHSSFFKNKERDLAIIALILASGIRLSEAVNVDLRDLNLNTMIVEVTRKGGKRDAVPFAPFAKTYFERYLEVRSQRYKTTAKDTAFFVTLYRDIASRIDPSSVEKLVAKYSQAFKVRVTPHKLRHTLATRLYAQTNSQVLVSNQLGHASTQVTDLYTHIINEEQKNALDSL.

A Core-binding (CB) domain is found at 16–121 (VMPPYVLEYY…ALSSLYKYLT (106 aa)). In terms of domain architecture, Tyr recombinase spans 169-354 (GFLDYIDSEY…INEEQKNALD (186 aa)). Residues arginine 210, lysine 234, histidine 306, arginine 309, and histidine 332 contribute to the active site. Tyrosine 341 functions as the O-(3'-phospho-DNA)-tyrosine intermediate in the catalytic mechanism.

This sequence belongs to the 'phage' integrase family. XerS subfamily.

Its subcellular location is the cytoplasm. FtsK is required for recombination. Functionally, site-specific tyrosine recombinase, which acts by catalyzing the cutting and rejoining of the recombining DNA molecules. Essential to convert dimers of the bacterial chromosome into monomers to permit their segregation at cell division. In Lactococcus lactis subsp. cremoris (strain SK11), this protein is Tyrosine recombinase XerS.